A 543-amino-acid chain; its full sequence is Zinc finger protein 34 (543 aa).

Residues 14–87 (VTFEDVAVFL…DMHGAEQPSV (74 aa)) form the KRAB domain. Residues 84 to 151 (QPSVDGSAHG…PGEQRGPRLV (68 aa)) are disordered. Over residues 124-147 (EPGEVHERVREPEGRLDRPGEQRG) the composition is skewed to basic and acidic residues. 12 consecutive C2H2-type zinc fingers follow at residues 179 to 201 (HKCDICEQSFEQRSYLNNHKRVH), 234 to 256 (YYCGCCGKAFRYSANLVKHQRLH), 262 to 284 (YKCEECGKAFHQSCELISHRRMH), 290 to 312 (YRCDECGKTFNQRPNLMKHQRIH), 318 to 340 (YKCSECGKHFSAYSSLIYHQRIH), 346 to 368 (YKCSDCGKAFSDGSILIRHRRTH), 374 to 396 (YECKECGKGFTQSSNLIQHQRIH), 402 to 424 (YKCNECEKAFIQKTKLVEHQRSH), 430 to 452 (YECNDCGKVFSQSTHLIQHQRIH), 458 to 480 (YKCSECGKAFHNSSRLIHHQRSH), 486 to 508 (YKCADCKKAFSQGTYLLQHRRIH), and 514 to 536 (YTCGECGKAFRHSSNMSQHQRIH).

This sequence belongs to the krueppel C2H2-type zinc-finger protein family.

The protein resides in the nucleus. May be involved in transcriptional regulation. The polypeptide is Zinc finger protein 34 (ZNF34) (Bos taurus (Bovine)).